The primary structure comprises 276 residues: Protein-glutamine gamma-glutamyltransferase (276 aa).

It belongs to the bacillus TGase family.

It catalyses the reaction L-glutaminyl-[protein] + L-lysyl-[protein] = [protein]-L-lysyl-N(6)-5-L-glutamyl-[protein] + NH4(+). In terms of biological role, probably plays a role in the assembly of the spore coat proteins by catalyzing epsilon-(gamma-glutamyl)lysine cross-links. The chain is Protein-glutamine gamma-glutamyltransferase from Bacillus cereus (strain G9842).